We begin with the raw amino-acid sequence, 146 residues long: Ribosomal RNA large subunit methyltransferase H (146 aa).

S-adenosyl-L-methionine is bound by residues leucine 62, glycine 94, and 113-118; that span reads LGELTL.

This sequence belongs to the RNA methyltransferase RlmH family. Homodimer.

Its subcellular location is the cytoplasm. It carries out the reaction pseudouridine(1915) in 23S rRNA + S-adenosyl-L-methionine = N(3)-methylpseudouridine(1915) in 23S rRNA + S-adenosyl-L-homocysteine + H(+). Specifically methylates the pseudouridine at position 1915 (m3Psi1915) in 23S rRNA. The chain is Ribosomal RNA large subunit methyltransferase H from Deinococcus radiodurans (strain ATCC 13939 / DSM 20539 / JCM 16871 / CCUG 27074 / LMG 4051 / NBRC 15346 / NCIMB 9279 / VKM B-1422 / R1).